A 38-amino-acid polypeptide reads, in one-letter code: Photosystem II reaction center protein L (38 aa).

Residues 17 to 37 (SLYWGLLLIFVLAVLFSSYFF) traverse the membrane as a helical segment.

This sequence belongs to the PsbL family. In terms of assembly, PSII is composed of 1 copy each of membrane proteins PsbA, PsbB, PsbC, PsbD, PsbE, PsbF, PsbH, PsbI, PsbJ, PsbK, PsbL, PsbM, PsbT, PsbX, PsbY, PsbZ, Psb30/Ycf12, at least 3 peripheral proteins of the oxygen-evolving complex and a large number of cofactors. It forms dimeric complexes.

Its subcellular location is the plastid. The protein localises to the chloroplast thylakoid membrane. In terms of biological role, one of the components of the core complex of photosystem II (PSII). PSII is a light-driven water:plastoquinone oxidoreductase that uses light energy to abstract electrons from H(2)O, generating O(2) and a proton gradient subsequently used for ATP formation. It consists of a core antenna complex that captures photons, and an electron transfer chain that converts photonic excitation into a charge separation. This subunit is found at the monomer-monomer interface and is required for correct PSII assembly and/or dimerization. The protein is Photosystem II reaction center protein L of Ephedra sinica (Chinese ephedra).